The sequence spans 505 residues: Deoxyguanosinetriphosphate triphosphohydrolase (505 aa).

The region spanning 66–273 (RLTHSMEVQQ…MEAADDISYC (208 aa)) is the HD domain.

Belongs to the dGTPase family. Type 1 subfamily. Homotetramer. Mg(2+) is required as a cofactor.

The catalysed reaction is dGTP + H2O = 2'-deoxyguanosine + triphosphate + H(+). DGTPase preferentially hydrolyzes dGTP over the other canonical NTPs. This chain is Deoxyguanosinetriphosphate triphosphohydrolase, found in Shigella boydii serotype 4 (strain Sb227).